The sequence spans 1363 residues: Spike glycoprotein (1363 aa).

Residues 1–13 form the signal peptide; sequence MFLILLISLPMAL. The Extracellular portion of the chain corresponds to 14–1307; the sequence is AVIGDLKCTT…GTYEYYVKWP (1294 aa). Residues 15-298 form the BetaCoV S1-NTD domain; sequence VIGDLKCTTV…DFMSEIKCKT (284 aa). 5 disulfide bridges follow: Cys21-Cys165, Cys160-Cys193, Cys172-Cys252, Cys286-Cys296, and Cys331-Cys356. N-linked (GlcNAc...) asparagine; by host glycans are attached at residues Asn59 and Asn133. The N-linked (GlcNAc...) asparagine; by host glycan is linked to Asn198. In terms of domain architecture, BetaCoV S1-CTD spans 329–617; the sequence is PDCNIEAWLN…DVNSGTTCST (289 aa). The N-linked (GlcNAc...) asparagine; by host glycan is linked to Asn359. Cystine bridges form between Cys374-Cys427 and Cys386-Cys615. Residues Asn437, Asn649, Asn676, Asn696, Asn714, Asn739, and Asn788 are each glycosylated (N-linked (GlcNAc...) asparagine; by host). 2 fusion peptide regions span residues 914–935 and 933–953; these read SAIE…VEAY and EAYN…VQSY. Asn937 carries an N-linked (GlcNAc...) asparagine; by host glycan. An intrachain disulfide couples Cys938 to Cys949. The segment at 1014 to 1064 is heptad repeat 1; sequence QKLIANAFNNALDAIQEGFDATNSALVKIQAVVNANAEALNNLLQQLSNRF. A coiled-coil region spans residues 1043 to 1087; it reads QAVVNANAEALNNLLQQLSNRFGAISSSLQEILSRLDALEAQAQI. 6 N-linked (GlcNAc...) asparagine; by host glycosylation sites follow: Asn1194, Asn1224, Asn1234, Asn1253, Asn1267, and Asn1288. The tract at residues 1258–1296 is heptad repeat 2; it reads APDLSLDYINVTFLDLQDEMNRLQEAIKVLNQSYINLKD. Residues 1269 to 1297 adopt a coiled-coil conformation; it reads TFLDLQDEMNRLQEAIKVLNQSYINLKDI. The helical transmembrane segment at 1308–1328 threads the bilayer; sequence WYVWLLIGLAGVAMLVLLFFI. The Cytoplasmic segment spans residues 1329–1363; it reads CCCTGCGTSCFKKCGGCCDDYTGHQELVIKTSHDD. The KxHxx signature appears at 1359–1363; that stretch reads TSHDD.

The protein belongs to the betacoronaviruses spike protein family. As to quaternary structure, homotrimer; each monomer consists of a S1 and a S2 subunit. The resulting peplomers protrude from the virus surface as spikes. In terms of processing, specific enzymatic cleavages in vivo yield mature proteins. The precursor is processed into S1 and S2 by host cell furin or another cellular protease to yield the mature S1 and S2 proteins. Additionally, a second cleavage leads to the release of a fusion peptide after viral attachment to host cell receptor. Post-translationally, the cytoplasmic Cys-rich domain is palmitoylated. Spike glycoprotein is digested within host endosomes.

The protein localises to the virion membrane. It is found in the host endoplasmic reticulum-Golgi intermediate compartment membrane. The protein resides in the host cell membrane. Attaches the virion to the cell membrane by interacting with host receptor, initiating the infection. Its function is as follows. Mediates fusion of the virion and cellular membranes by acting as a class I viral fusion protein. Under the current model, the protein has at least three conformational states: pre-fusion native state, pre-hairpin intermediate state, and post-fusion hairpin state. During viral and target cell membrane fusion, the coiled coil regions (heptad repeats) assume a trimer-of-hairpins structure, positioning the fusion peptide in close proximity to the C-terminal region of the ectodomain. The formation of this structure appears to drive apposition and subsequent fusion of viral and target cell membranes. In terms of biological role, acts as a viral fusion peptide which is unmasked following S2 cleavage occurring upon virus endocytosis. In Bos taurus (Bovine), this protein is Spike glycoprotein.